Here is a 351-residue protein sequence, read N- to C-terminus: Phosphate acyltransferase (351 aa).

The protein belongs to the PlsX family. Homodimer. Probably interacts with PlsY.

It is found in the cytoplasm. It carries out the reaction a fatty acyl-[ACP] + phosphate = an acyl phosphate + holo-[ACP]. It functions in the pathway lipid metabolism; phospholipid metabolism. In terms of biological role, catalyzes the reversible formation of acyl-phosphate (acyl-PO(4)) from acyl-[acyl-carrier-protein] (acyl-ACP). This enzyme utilizes acyl-ACP as fatty acyl donor, but not acyl-CoA. The chain is Phosphate acyltransferase from Neisseria meningitidis serogroup A / serotype 4A (strain DSM 15465 / Z2491).